Reading from the N-terminus, the 278-residue chain is ABC transporter I family member 11, chloroplastic (278 aa).

The N-terminal 49 residues, 1–49 (MAVSTFSSPTPVFGIAEPPASFSSTAIGWKQPLRFRRTKKPRVISCDYS), are a transit peptide targeting the chloroplast. In terms of domain architecture, ABC transporter spans 51-278 (IEVRDVCYRP…GVLVAERPPL (228 aa)). 85–92 (GKSGSGKT) is a binding site for ATP.

The protein belongs to the ABC transporter superfamily. ABCI family.

It localises to the plastid. The protein localises to the chloroplast. The polypeptide is ABC transporter I family member 11, chloroplastic (ABCI11) (Arabidopsis thaliana (Mouse-ear cress)).